The chain runs to 292 residues: Cyclic dipurine nucleotide synthase (292 aa).

Glutamine 47 lines the ATP pocket. 48–52 (GSYRN) contributes to the GTP binding site. Residues aspartate 61 and aspartate 63 each contribute to the Mg(2+) site. Residues aspartate 63, 121–122 (NK), and aspartate 136 contribute to the ATP site. Aspartate 136 is a Mg(2+) binding site. GTP-binding residues include lysine 197 and serine 216.

This sequence belongs to the CD-NTase family. E01 subfamily. Mg(2+) serves as cofactor.

It carries out the reaction 2 ATP = 3',3'-c-di-AMP + 2 diphosphate. The catalysed reaction is 2 GTP = 3',3'-c-di-GMP + 2 diphosphate. It catalyses the reaction GTP + ATP = 3',3'-cGAMP + 2 diphosphate. Cyclic nucleotide synthase (second messenger synthase) of a CBASS antivirus system. CBASS (cyclic oligonucleotide-based antiphage signaling system) provides immunity against bacteriophage. The CD-NTase protein synthesizes cyclic nucleotides in response to infection; these serve as specific second messenger signals. The signals activate a diverse range of effectors, leading to bacterial cell death and thus abortive phage infection. A type I-A(GA) CBASS system. In terms of biological role, cyclic dinucleotide synthase that catalyzes the synthesis of 3'3'-cyclic GMP-AMP (cGAMP) from GTP and ATP, and of c-di-AMP and c-di-GMP, that are second messengers for cell signal transduction. The protein is Cyclic dipurine nucleotide synthase of Elizabethkingia meningoseptica (Chryseobacterium meningosepticum).